Consider the following 490-residue polypeptide: Adenylosuccinate synthetase 1, chloroplastic (490 aa).

The N-terminal 47 residues, 1-47 (MSLSTLSHPAAAAAAATGSGKSHFRTAPAAQSVRFPKARPPVPAAVS), are a transit peptide targeting the chloroplast. Residues 14-36 (AAATGSGKSHFRTAPAAQSVRFP) form a disordered region. GTP is bound by residues 77–83 (GDEGKGK) and 105–107 (GHT). Asp78 functions as the Proton acceptor in the catalytic mechanism. Mg(2+) contacts are provided by Asp78 and Gly105. Residues 78-81 (DEGK), 103-106 (NAGH), Thr195, Arg209, Gln289, Thr304, and Arg368 contribute to the IMP site. Residue His106 is the Proton donor of the active site. Residue 364–370 (TTTGRPR) coordinates substrate. GTP-binding positions include Arg370, 396-398 (KLD), and 479-481 (GVG).

This sequence belongs to the adenylosuccinate synthetase family. In terms of assembly, homodimer. It depends on Mg(2+) as a cofactor.

It localises to the plastid. Its subcellular location is the chloroplast. It catalyses the reaction IMP + L-aspartate + GTP = N(6)-(1,2-dicarboxyethyl)-AMP + GDP + phosphate + 2 H(+). Its pathway is purine metabolism; AMP biosynthesis via de novo pathway; AMP from IMP: step 1/2. Plays an important role in the de novo pathway and in the salvage pathway of purine nucleotide biosynthesis. Catalyzes the first committed step in the biosynthesis of AMP from IMP. The sequence is that of Adenylosuccinate synthetase 1, chloroplastic from Sorghum bicolor (Sorghum).